A 152-amino-acid chain; its full sequence is MLHSSIYWKNLINTFESGCFSIAEVKFIFSNIHIYKNICNPYKNYQLPELARNLQSSKKLDNAILKQDKKNIIDILSPISGIFYSSSKPGASPFVAVGSVVSKGQTLCIIEAMKTMNEIESDSIGKIHQICARNGDFVTKNQVLMKIILEQS.

One can recognise a Biotinyl-binding domain in the interval 72-148; that stretch reads IIDILSPISG…TKNQVLMKII (77 aa). K114 is subject to N6-biotinyllysine.

Its subcellular location is the plastid. The protein resides in the chloroplast. Its pathway is lipid metabolism; fatty acid biosynthesis. This protein is a component of the acetyl coenzyme A carboxylase complex; first, biotin carboxylase catalyzes the carboxylation of the carrier protein and then the transcarboxylase transfers the carboxyl group to form malonyl-CoA. This chain is Biotin carboxyl carrier protein of acetyl-CoA carboxylase (accB), found in Cyanidium caldarium (Red alga).